The chain runs to 999 residues: Cytoplasmic dynein 2 intermediate chain 1 (999 aa).

Composition is skewed to basic and acidic residues over residues 1-19, 29-138, 146-260, and 268-300; these read MEPG…DDLR, PKEE…EEIR, LLSR…EDRH, and GLHY…KELE. Positions 1–350 are disordered; the sequence is MEPGKRRTKD…EHEAREKAEE (350 aa). Serine 250 is subject to Phosphoserine. The span at 318–338 shows a compositional bias: acidic residues; it reads LEDDFVDYEDDFEVCDGDDDS. Over residues 339–350 the composition is skewed to basic and acidic residues; the sequence is NNEHEAREKAEE. The interval 416–495 is binding to the DYNLT2B-DYNLT1/DYNLT3 dimer; the sequence is ASHRQKSRSQ…DIQTEDIETR (80 aa). 4 WD repeats span residues 637-677, 718-764, 850-890, and 895-935; these read ICES…RIHH, AYKK…KADI, VRPI…PIMQ, and TSGH…LGPV.

It belongs to the dynein light intermediate chain family. In terms of assembly, intermediate chain of the cytoplasmic dynein complex 2, a multisubunit complex, composed at least of eleven different proteins. The cytoplasmic dynein 2 complex consists of two catalytic heavy chains (HCs) and a number of non-catalytic subunits presented by intermediate chains (ICs), light intermediate chains (LICs) and light chains (LCs). Among them, a heavy chain (DYNC2H1), two intermediate chains (DYNC2I2 and DYNC2I1), a light intermediate chain (DYNC2LI1), and a light chain (DYNLT2B) are unique to the cytoplasmic dynein complex 2, but a subset of the light chains are also shared by dynein-1 and dynein-2 complexes. Interacts with DYNC2I2; their C-terminal domains each bind a copy of the heavy chain, and their extended N-terminal regions are held together by an array of light chain dimers. Interacts with DYNLT2B. Interacts (via the N-terminal half) with DYNLT2B-DYNLT1 dimer or with DYNLT2B-DYNLT3 dimer; this interaction is crucial for retrograde trafficking of ciliary proteins.

The protein resides in the cell projection. It localises to the cilium. Its subcellular location is the cytoplasm. The protein localises to the cytoskeleton. It is found in the microtubule organizing center. The protein resides in the centrosome. Acts as one of several non-catalytic accessory components of the cytoplasmic dynein 2 complex (dynein-2 complex), a motor protein complex that drives the movement of cargos along microtubules within cilia and flagella in concert with the intraflagellar transport (IFT) system. DYNC2I1 plays a major role in retrograde ciliary protein trafficking in cilia and flagella. Also requires to maintain a functional transition zone. This Mus musculus (Mouse) protein is Cytoplasmic dynein 2 intermediate chain 1 (Dync2i1).